The chain runs to 117 residues: Ubiquitin-like protein pmt3/smt3 (117 aa).

The disordered stretch occupies residues 1–37; it reads MSESPSANISDADKSAITPTTGDTSQQDVKPSTEHIN. The span at 17–30 shows a compositional bias: polar residues; that stretch reads ITPTTGDTSQQDVK. The Ubiquitin-like domain occupies 35–115; sequence HINLKVVGQD…LEQLGGCTHL (81 aa). Residue G111 forms a Glycyl lysine isopeptide (Gly-Lys) (interchain with K-? in acceptor proteins) linkage. Residues 112–117 constitute a propeptide that is removed on maturation; it reads CTHLCL.

Belongs to the ubiquitin family. SUMO subfamily. As to quaternary structure, interacts with rfp1.

The protein resides in the nucleus. Functionally, required for chromosome segregation where it may be involved in microtubule assembly. Loss of smt3 leads to an increase in telomere length. This Schizosaccharomyces pombe (strain 972 / ATCC 24843) (Fission yeast) protein is Ubiquitin-like protein pmt3/smt3 (pmt3).